The following is a 497-amino-acid chain: Ethanolamine-phosphate phospho-lyase (497 aa).

Lys278 carries the N6-(pyridoxal phosphate)lysine modification. The disordered stretch occupies residues 440 to 497 (TGAETESGISKNTPCRTKMPKEAQSELLRDSSLESRENPSQKRNGLCTDSLLSKRLRT). Over residues 458–479 (MPKEAQSELLRDSSLESRENPS) the composition is skewed to basic and acidic residues.

It belongs to the class-III pyridoxal-phosphate-dependent aminotransferase family. As to quaternary structure, homotetramer. It depends on pyridoxal 5'-phosphate as a cofactor.

It localises to the mitochondrion. It catalyses the reaction phosphoethanolamine + H2O = acetaldehyde + NH4(+) + phosphate. Catalyzes the pyridoxal-phosphate-dependent breakdown of phosphoethanolamine, converting it to ammonia, inorganic phosphate and acetaldehyde. This chain is Ethanolamine-phosphate phospho-lyase (ETNPPL), found in Bos taurus (Bovine).